The following is a 268-amino-acid chain: Holocytochrome c-type synthase (268 aa).

Residues 1 to 22 (MGLSPSAPAVAVQASNASASPP) show a composition bias toward low complexity. Residues 1-25 (MGLSPSAPAVAVQASNASASPPSGC) are disordered. Residue Gly-2 is the site of N-myristoyl glycine attachment. 2 HRM repeats span residues 24 to 29 (GCPMHE) and 34 to 39 (GCPVNT).

This sequence belongs to the cytochrome c-type heme lyase family.

It localises to the mitochondrion inner membrane. Its subcellular location is the membrane. The catalysed reaction is holo-[cytochrome c] = apo-[cytochrome c] + heme b. Its function is as follows. Lyase that catalyzes the covalent linking of the heme group to the cytochrome C apoprotein to produce the mature functional cytochrome. The protein is Holocytochrome c-type synthase of Homo sapiens (Human).